The following is an 873-amino-acid chain: MPVRQKDAQRALQLLEEYQTKLSQTGDPHLRLSIERVINIFKSTLFQALVDIQEYYEVSLQDTEDKPIEDSSLKSRESFPPVNEWNLSVPPSTTGPTEPVPINLPQTEEKYRYQDEDTTSPPEHSSPHIPGDARPPELVQVSEKNISQIENVHGYVSHSHISPMKQADVIPPPSAPIIPVIPISPVPAETTAIIPAPASQASPAPVVVNTESLDSSPYVNGTEADYEYEEITLERGNSGLGFSIAGGTDNPHIGEDPSIFITKIIPGGAAAQDGRLRVNDCILRVNDVDVRDVTHSNAVEALKEAGCIVRLYVRRRKPLSEKIMDVKLVKGPKGLGFSIAGGVGNQHIPGDNSIYITKIIEGGAAHKDGRLQIGDKLLAVNAVCLEEVTHEDAVAALKNTPDVVYLKVAKPTSVFMNDSYAPPDVTSSYSQHMENHISTQSYLSQPLTPATPSRYSPVSKGMLGDDEITREPRKIVLHRGTTGLGFNIVGGEDGEGIFISFILAGGPADLCGELRKGDRIVSVNGVDLRSATHEQAAAALKNAGQTVTIIAQYRPEEYSRFEAKIHDLREQMMNSSISSGSGSLRTSQKRTLYVRALFDYDITKTVKFNSKSRDKASLNDKRRKTLFSRKFLFSKNKDSGEQDTSDVDQHVTSNASDSESSFRGQEDYVLSYETVTQQEVSYSRPVIILGPMKDRINDDLISEFPDKFGSCVPHTTRPKRDYEVDGRDYHFVNSREQMEKDIQDHKFIEAGQYNNHLYGTSVQSVREVAEKGKHCILDVSGNAIKRLQLAQLYPIAVFIKPKSVENILEMNKRLMEEQGRKTYDRAMKLEQEFLEHFTAIVQGDTLEEIYNQVKQIIEEQSGPFIWVPVKEKL.

Positions 4–64 (RQKDAQRALQ…YYEVSLQDTE (61 aa)) constitute an L27 domain. The interval 62–135 (DTEDKPIEDS…SPHIPGDARP (74 aa)) is disordered. Basic and acidic residues predominate over residues 63–77 (TEDKPIEDSSLKSRE). Polar residues predominate over residues 85–96 (WNLSVPPSTTGP). PDZ domains follow at residues 230–317 (EITL…RRRK) and 325–412 (DVKL…AKPT). The segment covering 441-456 (SYLSQPLTPATPSRYS) has biased composition (polar residues). The segment at 441-464 (SYLSQPLTPATPSRYSPVSKGMLG) is disordered. The 82-residue stretch at 474–555 (KIVLHRGTTG…TVTIIAQYRP (82 aa)) folds into the PDZ 3 domain. Positions 636–662 (NKDSGEQDTSDVDQHVTSNASDSESSF) are disordered. Over residues 650-662 (HVTSNASDSESSF) the composition is skewed to polar residues. Positions 683 to 858 (SRPVIILGPM…IYNQVKQIIE (176 aa)) constitute a Guanylate kinase-like domain.

This sequence belongs to the MAGUK family.

It localises to the cell membrane. The protein resides in the endoplasmic reticulum membrane. Its subcellular location is the cell junction. The protein localises to the apical cell membrane. In terms of biological role, essential multidomain scaffolding protein required for normal development. Recruits channels, receptors and signaling molecules to discrete plasma membrane domains in polarized cells. Promotes epithelial cell layer barrier function via maintaining cell-cell adhesion. May play a role in adherens junction assembly, signal transduction and cell proliferation. May play a role in synapse assembly and function. The polypeptide is Disks large homolog 1 (dlg1) (Danio rerio (Zebrafish)).